Reading from the N-terminus, the 249-residue chain is Phosphate import ATP-binding protein PstB 2 (249 aa).

Residues I4 to I244 form the ABC transporter domain. ATP is bound at residue G36–S43.

The protein belongs to the ABC transporter superfamily. Phosphate importer (TC 3.A.1.7) family. In terms of assembly, the complex is composed of two ATP-binding proteins (PstB), two transmembrane proteins (PstC and PstA) and a solute-binding protein (PstS).

Its subcellular location is the cell membrane. It catalyses the reaction phosphate(out) + ATP + H2O = ADP + 2 phosphate(in) + H(+). In terms of biological role, part of the ABC transporter complex PstSACB involved in phosphate import. Responsible for energy coupling to the transport system. The protein is Phosphate import ATP-binding protein PstB 2 of Caldanaerobacter subterraneus subsp. tengcongensis (strain DSM 15242 / JCM 11007 / NBRC 100824 / MB4) (Thermoanaerobacter tengcongensis).